The primary structure comprises 318 residues: MKRYLILLIVTGVLLWNVVEVLRFRVEFSGGTFVLKNVQDIFVPLEVRGAKVECSKNFVLEENGVLIKQVRPGETVTLHFESGGIFRVKKELKIEARASEEDSDGDGYPDSLELDSEDSERFRNWFVWIALSAFKNDPLLWPKEERDCSGFVRYCAREALKKHTGSWFSLSGYNGPVWEDVEKYNYPNLPLVGTKMFRIEKGAYRGVEDFSNFAVARILVECSMEFVTKSVSEALPGDIAVFFHPEDVEMPYHLMIFVGNLNLADHEGWFVYHTGPIGENPGELRFVRYSELVNYDPSWAPLEINPYFLGFYRFRFLK.

To E.coli YfaT and P.aeruginosa PA4490.

This is an uncharacterized protein from Thermotoga maritima (strain ATCC 43589 / DSM 3109 / JCM 10099 / NBRC 100826 / MSB8).